Here is a 1850-residue protein sequence, read N- to C-terminus: Chitin synthase V (1850 aa).

The tract at residues 1–27 (MASTLPPLGGGNGGPHTQHSLPSLPAH) is disordered. The Myosin motor domain occupies 1-779 (MASTLPPLGG…EIAGLVDGSA (779 aa)). 105–112 (GESGSGKS) serves as a coordination point for ATP. N-linked (GlcNAc...) asparagine glycans are attached at residues Asn245, Asn290, Asn427, Asn481, and Asn558. Residues 289-309 (NNTSATGDDSGGFSHEGGQTS) form a disordered region. The interval 593-647 (SKPMRAPSVMSRKGGRGRGIASQRRQQESNLFDSGNTHAESRSPKGGNKGGIDQG) is disordered. Residues 620 to 630 (ESNLFDSGNTH) are compositionally biased toward polar residues. The tract at residues 656–680 (LDNVQKAVTDPGTNAYFVFCLKPND) is actin-binding. The next 2 helical transmembrane spans lie at 884–904 (WVFT…RWIG) and 923–943 (MLIW…PMLI). One can recognise a Cytochrome b5 heme-binding domain in the interval 947–1006 (QNVFSAAELSSHNGKDGNSAYVSIRGHVIDLGSFADRHYPSFVSRKTMLNYAGMDVSSLF). Residues Asn1033, Asn1058, and Asn1186 are each glycosylated (N-linked (GlcNAc...) asparagine). A helical transmembrane segment spans residues 1196–1216 (LVLAVSILLVSVIAFKFFAAL). Asn1453 and Asn1559 each carry an N-linked (GlcNAc...) asparagine glycan. Transmembrane regions (helical) follow at residues 1568–1588 (LIPM…VVFI), 1590–1610 (LLST…IVLV), 1617–1637 (VPIT…IIFI), and 1644–1664 (MVGW…GLPL). N-linked (GlcNAc...) asparagine glycosylation occurs at Asn1767. The region spanning 1800–1850 (LPSDDALLAEIRDILKTADLMTVTKKGIKQELERRFDVPLDAKRAYINSGK) is the DEK-C domain.

The protein in the N-terminal section; belongs to the TRAFAC class myosin-kinesin ATPase superfamily. Myosin family. This sequence in the C-terminal section; belongs to the chitin synthase family. Class V subfamily. Expressed in conidia and during appressorium formation.

It is found in the cell membrane. The protein resides in the cell septum. The protein localises to the cell tip. It catalyses the reaction [(1-&gt;4)-N-acetyl-beta-D-glucosaminyl](n) + UDP-N-acetyl-alpha-D-glucosamine = [(1-&gt;4)-N-acetyl-beta-D-glucosaminyl](n+1) + UDP + H(+). In terms of biological role, polymerizes chitin, a structural polymer of the cell wall and septum, by transferring the sugar moiety of UDP-GlcNAc to the non-reducing end of the growing chitin polymer. Contributes to the production of conidia and the ability of fungal conidia to germinate. Involved in the fungal cell wall integrity and the ability of conidia to withstand biophysical pressure. Required for appressorium formation and evasion of insect cellular and/or humoral defenses, promoting the fungal dimorphic transition to the production of hyphal bodies that occurs within hosts, and ultimately to virulence. The chain is Chitin synthase V from Metarhizium acridum (strain CQMa 102).